The sequence spans 485 residues: Sodium-coupled neutral amino acid symporter 1 (485 aa).

The Cytoplasmic segment spans residues 1-74 (MMHFKSGLEL…EYIPGTTSLG (74 aa)). S6 is subject to Phosphoserine. T11 is modified (phosphothreonine). S25, S28, S49, and S52 each carry phosphoserine. Position 54 is a phosphothreonine (T54). S56 carries the post-translational modification Phosphoserine. A helical transmembrane segment spans residues 75–97 (MSVFNLSNAIMGSGILGLAFALA). Over 98-112 (NTGILLFLILLTSVT) the chain is Extracellular. A helical membrane pass occupies residues 113–133 (LLSIYSINLLLICSKETGCMV). Over 134–148 (YEKLGEQVFGTTGKL) the chain is Cytoplasmic. Residues 149–169 (VIFGATSLQNTGAMLSYLFIV) traverse the membrane as a helical segment. The Extracellular portion of the chain corresponds to 170–188 (KNELPSAIKSLMGEEDAFS). Residues 189 to 211 (AWYVDGRVLVVMVTFGIILPLCL) traverse the membrane as a helical segment. The Cytoplasmic portion of the chain corresponds to 212–216 (LKNLG). The helical transmembrane segment at 217-237 (YLGYTSGFSLSCMMFFLIVVI) threads the bilayer. Residues 238 to 273 (YKKFQTPCMSVEQNSTVSANVTDACTPKYVTFNSKT) are Extracellular-facing. A disulfide bridge connects residues C245 and C262. Residues N251 and N257 are each glycosylated (N-linked (GlcNAc...) asparagine). Residues 274–294 (VYALPTIAFAFVCHPSVLPIY) form a helical membrane-spanning segment. Over 295 to 310 (SELKDRSQKKMQMVSN) the chain is Cytoplasmic. Residues 311 to 331 (ISFFAMFVMYFLTAIFGYLTF) form a helical membrane-spanning segment. Residues 332–348 (YEKVQSDLLHKYQSTGD) are Extracellular-facing. A helical membrane pass occupies residues 349 to 369 (ILILTVRLAVIVAVILTVPVL). At 370-391 (FFTVRSSLFELAKKTKFHLCRH) the chain is on the cytoplasmic side. The helical transmembrane segment at 392 to 412 (VLVTIILLIIINLLVIFIPSM) threads the bilayer. The Extracellular portion of the chain corresponds to 413–414 (KD). A helical transmembrane segment spans residues 415–435 (IFGVVGVTSANMLIFILPSSL). Residues 436–450 (YLKITNQDGDKGTQR) are Cytoplasmic-facing. The helical transmembrane segment at 451–471 (IWAALFLGLGVLFSLISIPLV) threads the bilayer. Topologically, residues 472 to 485 (IYDWACSSGTDEGH) are extracellular.

Belongs to the amino acid/polyamine transporter 2 family. Post-translationally, N-glycosylation plays an important role in the L-glutamine transport. Specifically expressed in brain and retina (at protein level). Also detected in spleen, small intestine and lung.

It is found in the cell membrane. It catalyses the reaction L-glutamine(in) + Na(+)(in) = L-glutamine(out) + Na(+)(out). It carries out the reaction L-alanine(in) + Na(+)(in) = L-alanine(out) + Na(+)(out). The catalysed reaction is L-histidine(in) + Na(+)(in) = L-histidine(out) + Na(+)(out). The enzyme catalyses L-asparagine(in) + Na(+)(in) = L-asparagine(out) + Na(+)(out). It catalyses the reaction L-serine(in) + Na(+)(in) = L-serine(out) + Na(+)(out). It carries out the reaction L-cysteine(in) + Na(+)(in) = L-cysteine(out) + Na(+)(out). The catalysed reaction is L-methionine(in) + Na(+)(in) = L-methionine(out) + Na(+)(out). The enzyme catalyses glycine(in) + Na(+)(in) = glycine(out) + Na(+)(out). It catalyses the reaction L-threonine(in) + Na(+)(in) = L-threonine(out) + Na(+)(out). It carries out the reaction L-proline(in) + Na(+)(in) = L-proline(out) + Na(+)(out). Inhibited by alpha-(methylamino)isobutyric acid (MeAIB). Inhibited by lithium, potassium, choline ions, N-methylglucamine. The pH dependence has an allosteric effect on the transport. In terms of biological role, symporter that cotransports short-chain neutral amino acids and sodium ions from the extraccellular to the intracellular side of the cell membrane. The transport is elctrogenic, pH dependent and driven by the Na(+) electrochemical gradient. Participates in the astroglia-derived glutamine transport into GABAergic interneurons for neurotransmitter GABA de novo synthesis. May also contributes to amino acid transport in placental trophoblast. Regulates synaptic plasticity. The protein is Sodium-coupled neutral amino acid symporter 1 of Mus musculus (Mouse).